A 485-amino-acid polypeptide reads, in one-letter code: Alginate biosynthesis protein AlgA (485 aa).

Belongs to the mannose-6-phosphate isomerase type 2 family. Monomer. The cofactor is Co(2+).

The enzyme catalyses D-mannose 6-phosphate = D-fructose 6-phosphate. It catalyses the reaction alpha-D-mannose 1-phosphate + GTP + H(+) = GDP-alpha-D-mannose + diphosphate. The protein operates within nucleotide-sugar biosynthesis; GDP-alpha-D-mannose biosynthesis; GDP-alpha-D-mannose from alpha-D-mannose 1-phosphate (GTP route): step 1/1. It functions in the pathway nucleotide-sugar biosynthesis; GDP-alpha-D-mannose biosynthesis; alpha-D-mannose 1-phosphate from D-fructose 6-phosphate: step 1/2. In terms of biological role, produces a precursor for alginate polymerization. The alginate layer provides a protective barrier against host immune defenses and antibiotics. This chain is Alginate biosynthesis protein AlgA (algA), found in Pseudomonas putida (strain ATCC 47054 / DSM 6125 / CFBP 8728 / NCIMB 11950 / KT2440).